The primary structure comprises 347 residues: GMP reductase (347 aa).

Residue 108–131 (ADFQKTKDVMALSDELIFICIDIA) participates in NADP(+) binding. Glycine 181 and glycine 183 together coordinate K(+). Residue cysteine 186 is the Thioimidate intermediate of the active site. NADP(+) is bound at residue 216-239 (IIGDGGCTCPGDVAKAFGGGADFV).

Belongs to the IMPDH/GMPR family. GuaC type 1 subfamily. In terms of assembly, homotetramer.

The catalysed reaction is IMP + NH4(+) + NADP(+) = GMP + NADPH + 2 H(+). In terms of biological role, catalyzes the irreversible NADPH-dependent deamination of GMP to IMP. It functions in the conversion of nucleobase, nucleoside and nucleotide derivatives of G to A nucleotides, and in maintaining the intracellular balance of A and G nucleotides. The polypeptide is GMP reductase (Vibrio cholerae serotype O1 (strain ATCC 39541 / Classical Ogawa 395 / O395)).